Reading from the N-terminus, the 436-residue chain is p-aminobenzoyl-glutamate hydrolase subunit A (436 aa).

Belongs to the peptidase M20 family. Forms a heterodimer with AbgB. Requires Mn(2+) as cofactor.

Component of the p-aminobenzoyl-glutamate hydrolase multicomponent enzyme system which catalyzes the cleavage of p-aminobenzoyl-glutamate (PABA-GLU) to form p-aminobenzoate (PABA) and glutamate. AbgAB does not degrade dipeptides and the physiological role of abgABT should be clarified. This is p-aminobenzoyl-glutamate hydrolase subunit A (abgA) from Escherichia coli (strain K12).